The primary structure comprises 450 residues: MVKLFCAIVGAAGSAFPVDIDAGQSAGDLKDAIKAKNPATITCDAKDLQLSLAKTADGAWLPDDDQAALDLEDGKVHEDIQALIDGEKMKATWTIEDVLTANNMTKRKGRAPKSRQIHVLVVVPEGAFGSASETSKMDQLVEKVDKMYEQTVLGKRKYVHSEVTSTQGRQLLNDLDIRVEFVRTVPFDAGEGSSVDPYEWKRVIIENGEEVVLTEEQQRKRYRRYVEHNIGAVLKEKQLCVIGVERGTNILTVKVPGREIELAGRTDLLILSDLVAMRPTEVQYLPGVKMLIEVKRDVKASNDFQALSELIALDLLVDDPVMALLTDLKGEWIFFWVAEKINSSARIHKAAINKPGEAFEVIRALLVQPPTAPADTDTTEIKLPCFQSPVKRLKLRKALPPIGEGGDNGGIRESIERYYDIASMLGPDIEMARAVARQVTRSIPTFSYFS.

Residues 1–17 (MVKLFCAIVGAAGSAFP) form the signal peptide. An LQLFLAK domain region spans residues 18–55 (VDIDAGQSAGDLKDAIKAKNPATITCDAKDLQLSLAKT). Residues 58-117 (GAWLPDDDQAALDLEDGKVHEDIQALIDGEKMKATWTIEDVLTANNMTKRKGRAPKSRQI) are DWL domain. The N-linked (GlcNAc...) asparagine glycan is linked to N103. Positions 118 to 124 (HVLVVVP) match the HVLVXXP motif motif. Residues 125–450 (EGAFGSASET…RSIPTFSYFS (326 aa)) form an effector domain region. Positions 218-224 (QRKRYRR) match the Nuclear localization signal (NLS) motif. N342 carries an N-linked (GlcNAc...) asparagine glycan.

This sequence belongs to the Crinkler effector family. As to quaternary structure, forms a homodimer via an inverted association manner. Forms heterodimers with CRN79 and CRN115.

It is found in the secreted. It localises to the host nucleus. The protein localises to the host nucleoplasm. Functionally, secreted effector that, with CRN115, is critical to pathogenesis by modulating host defenses. Induces cell death in plant host cells. Suppresses callose deposition and affects expression of defense-related genes including two salicylic acid (SA) signal-induced and antimicrobial PR genes (PR1 and PR2), and genes involved in jasmonic acid (JA)/ethylene (ET)-mediated defense pathway (ERF1, ORA59, PDF1.2). CRN115 and CRN63 may share the same molecular host targets that are involved in the cell death signal transduction pathway and that their differential activities are dependent on plant nuclear localization or not. Does not affect MAPK activation and BIK1 phosphorylation and acts downstream of the MAPK cascades in PTI signaling. The polypeptide is Crinkler effector protein 63 (Phytophthora sojae (strain P6497) (Soybean stem and root rot agent)).